Here is a 222-residue protein sequence, read N- to C-terminus: UPF0758 protein YE0063 (222 aa).

The region spanning Val100–Leu222 is the MPN domain. His171, His173, and Asp184 together coordinate Zn(2+). The JAMM motif motif lies at His171–Asp184.

It belongs to the UPF0758 family. YicR subfamily.

This chain is UPF0758 protein YE0063, found in Yersinia enterocolitica serotype O:8 / biotype 1B (strain NCTC 13174 / 8081).